A 162-amino-acid chain; its full sequence is uncharacterized protein (162 aa).

The HTH asnC-type domain occupies 6–71; sequence LDDLDRAILK…PIKPRKLALV (66 aa). Residues 25–44 constitute a DNA-binding region (H-T-H motif); the sequence is IAEISNQLKKPESTVHFRIK.

This is an uncharacterized protein from Pyrococcus abyssi (strain GE5 / Orsay).